Here is a 369-residue protein sequence, read N- to C-terminus: 3-dehydroquinate synthase (369 aa).

NAD(+)-binding positions include 78-83 (DGERYK), 112-116 (GVIGD), 136-137 (TT), lysine 149, lysine 158, and 176-179 (TLTT). Zn(2+) contacts are provided by glutamate 191, histidine 254, and histidine 271.

The protein belongs to the sugar phosphate cyclases superfamily. Dehydroquinate synthase family. NAD(+) serves as cofactor. Requires Co(2+) as cofactor. The cofactor is Zn(2+).

Its subcellular location is the cytoplasm. The catalysed reaction is 7-phospho-2-dehydro-3-deoxy-D-arabino-heptonate = 3-dehydroquinate + phosphate. Its pathway is metabolic intermediate biosynthesis; chorismate biosynthesis; chorismate from D-erythrose 4-phosphate and phosphoenolpyruvate: step 2/7. Functionally, catalyzes the conversion of 3-deoxy-D-arabino-heptulosonate 7-phosphate (DAHP) to dehydroquinate (DHQ). The chain is 3-dehydroquinate synthase from Nitrosomonas europaea (strain ATCC 19718 / CIP 103999 / KCTC 2705 / NBRC 14298).